We begin with the raw amino-acid sequence, 292 residues long: Hypoxia responsive morphology factor A (292 aa).

Residues 48–70 (RRNGRRRNLEYVAQHRRKIARKI) carry the Bipartite nuclear localization signal motif. The interval 156–186 (GKEHYSLHLSTLPAIRNAFGDVIFDAIERSP) is RNA recognition motif (RRM)-like domain.

The protein belongs to the hrmA family.

It localises to the nucleus. Hypoxia responsive morphology factor that modulates the expression of the subtelomeric hrmA-associated cluster (HAC) containing genes that alter the hyphal surface (such as reduced total chitin or increased beta-glucan exposure) and perturb inter-hyphal interactions within the developing biofilms, resulting in a loss of vertically aligned polarized growing filaments. Consequently, this hypoxia-typic morphotype (called H-MORPH) with altered biofilm architecture leads to increased hypoxia fitness, increased host inflammation, rapid disease progression, and mortality in a murine model of invasive aspergillosis. This Aspergillus fumigatus (strain CBS 144.89 / FGSC A1163 / CEA10) (Neosartorya fumigata) protein is Hypoxia responsive morphology factor A.